The primary structure comprises 89 residues: Mitochondrial import inner membrane translocase subunit Tim9 (89 aa).

N-acetylalanine is present on Ala2. A Twin CX3C motif motif is present at residues 28-52; it reads CFLDCVKDFTTREVKPEEVTCSEHC. Cystine bridges form between Cys28/Cys52 and Cys32/Cys48.

It belongs to the small Tim family. Heterohexamer; composed of 3 copies of TIMM9 and 3 copies of TIMM10/TIM10A, named soluble 70 kDa complex. The complex forms a 6-bladed alpha-propeller structure and associates with the TIMM22 component of the TIM22 complex. Interacts with multi-pass transmembrane proteins in transit. Also forms a complex composed of TIMM9, TIMM10/TIM10A and FXC1/TIM10B.

It is found in the mitochondrion inner membrane. Functionally, mitochondrial intermembrane chaperone that participates in the import and insertion of multi-pass transmembrane proteins into the mitochondrial inner membrane. May also be required for the transfer of beta-barrel precursors from the TOM complex to the sorting and assembly machinery (SAM complex) of the outer membrane. Acts as a chaperone-like protein that protects the hydrophobic precursors from aggregation and guide them through the mitochondrial intermembrane space. The polypeptide is Mitochondrial import inner membrane translocase subunit Tim9 (Timm9) (Mus musculus (Mouse)).